Consider the following 123-residue polypeptide: Crossover junction endodeoxyribonuclease Hjc (123 aa).

Glu9 contributes to the Mg(2+) binding site. Ser29 is an active-site residue. Residues Asp33 and Glu46 each contribute to the Mg(2+) site.

Belongs to the Holliday junction resolvase Hjc family. As to quaternary structure, homodimer. Probably interacts with PCNA and RadB. Mg(2+) serves as cofactor. Mn(2+) is required as a cofactor.

It catalyses the reaction Endonucleolytic cleavage at a junction such as a reciprocal single-stranded crossover between two homologous DNA duplexes (Holliday junction).. With respect to regulation, cleavage inhibited by RadB in the absence (but not presence) of ATP. In terms of biological role, a structure-specific endonuclease that resolves Holliday junction (HJ) intermediates during genetic recombination. Cleaves 4-way DNA junctions introducing paired nicks in opposing strands, leaving a 5'-terminal phosphate and a 3'-terminal hydroxyl group that are subsequently ligated to produce recombinant products. Cleaves both mobile and immobile junctions. Binds 4-way junction DNA, a synthetic Hj, binding is not competed by dsDNA. The protein is Crossover junction endodeoxyribonuclease Hjc of Pyrococcus furiosus (strain ATCC 43587 / DSM 3638 / JCM 8422 / Vc1).